We begin with the raw amino-acid sequence, 124 residues long: Fluoride-specific ion channel FluC (124 aa).

A run of 3 helical transmembrane segments spans residues 5-27 (LFVALGGSIGAVFRYLLSIFMLQ), 70-90 (VGLLGALTTFSTFSNETLLLI), and 95-115 (WIKAFFNIALNLCLCIFMVYL). The Na(+) site is built by Gly-74 and Thr-77.

Belongs to the fluoride channel Fluc/FEX (TC 1.A.43) family.

The protein resides in the cell inner membrane. The enzyme catalyses fluoride(in) = fluoride(out). With respect to regulation, na(+) is not transported, but it plays an essential structural role and its presence is essential for fluoride channel function. Fluoride-specific ion channel. Important for reducing fluoride concentration in the cell, thus reducing its toxicity. The sequence is that of Fluoride-specific ion channel FluC from Shewanella sediminis (strain HAW-EB3).